The sequence spans 599 residues: Aspartate--tRNA(Asp/Asn) ligase (599 aa).

Glu172 contacts L-aspartate. An aspartate region spans residues Gln196–Lys199. Arg218 contacts L-aspartate. Residues Arg218 to Glu220 and Gln227 contribute to the ATP site. His451 provides a ligand contact to L-aspartate. Residue Glu485 participates in ATP binding. Arg492 provides a ligand contact to L-aspartate. ATP is bound at residue Gly537–Arg540.

It belongs to the class-II aminoacyl-tRNA synthetase family. Type 1 subfamily. Homodimer.

It localises to the cytoplasm. It catalyses the reaction tRNA(Asx) + L-aspartate + ATP = L-aspartyl-tRNA(Asx) + AMP + diphosphate. In terms of biological role, aspartyl-tRNA synthetase with relaxed tRNA specificity since it is able to aspartylate not only its cognate tRNA(Asp) but also tRNA(Asn). Reaction proceeds in two steps: L-aspartate is first activated by ATP to form Asp-AMP and then transferred to the acceptor end of tRNA(Asp/Asn). The protein is Aspartate--tRNA(Asp/Asn) ligase of Aromatoleum aromaticum (strain DSM 19018 / LMG 30748 / EbN1) (Azoarcus sp. (strain EbN1)).